The sequence spans 104 residues: Co-chaperonin GroES 1 (104 aa).

It belongs to the GroES chaperonin family. As to quaternary structure, heptamer of 7 subunits arranged in a ring. Interacts with the chaperonin GroEL.

It is found in the cytoplasm. Together with the chaperonin GroEL, plays an essential role in assisting protein folding. The GroEL-GroES system forms a nano-cage that allows encapsulation of the non-native substrate proteins and provides a physical environment optimized to promote and accelerate protein folding. GroES binds to the apical surface of the GroEL ring, thereby capping the opening of the GroEL channel. The sequence is that of Co-chaperonin GroES 1 from Mesorhizobium japonicum (strain LMG 29417 / CECT 9101 / MAFF 303099) (Mesorhizobium loti (strain MAFF 303099)).